The chain runs to 491 residues: Subtilase-type proteinase RRT12 (491 aa).

The signal sequence occupies residues 1 to 17 (MKPQCILISLLVNLAYA). 4 N-linked (GlcNAc...) asparagine glycosylation sites follow: N38, N64, N106, and N121. Residues 142–442 (PFDVGDKDRY…FPRLNIEAIA (301 aa)) enclose the Peptidase S8 domain. Residues D174 and H205 each act as charge relay system in the active site. N268 and N356 each carry an N-linked (GlcNAc...) asparagine glycan. The active-site Charge relay system is S365. Residue N449 is glycosylated (N-linked (GlcNAc...) asparagine).

Belongs to the peptidase S8 family. Post-translationally, N-glycosylated.

It localises to the spore wall. Subtilisin-related protease involved in the formation of a protective dityrosine layer required for spore wall assembly. Identified in a screen for mutants with increased levels of rDNA transcription. The chain is Subtilase-type proteinase RRT12 (RRT12) from Saccharomyces cerevisiae (strain ATCC 204508 / S288c) (Baker's yeast).